Consider the following 932-residue polypeptide: Protocadherin gamma-A12 (932 aa).

The signal sequence occupies residues 1 to 29; the sequence is MIPARLHRDYKGLVLLGILLGTLWETGCT. Cadherin domains follow at residues 30–133, 134–242, 243–347, 348–452, 453–562, and 570–683; these read QIRY…APYF, RESE…APAF, AQPE…APEV, VLTS…PPVF, PQAS…APEI, and DGST…SPAN. Residues 30–692 lie on the Extracellular side of the membrane; that stretch reads QIRYSVPEEL…NSETSDLTLY (663 aa). N-linked (GlcNAc...) asparagine glycosylation is found at Asn265, Asn419, and Asn545. A helical membrane pass occupies residues 693 to 713; sequence LVVAVAAVSCVFLAFVILLLA. Topologically, residues 714-932 are cytoplasmic; the sequence is LRLRRWHKSR…KKKSGKKEKK (219 aa). 2 disordered regions span residues 803–841 and 902–932; these read SHGL…WPNN and ATLT…KEKK. Positions 816–841 are enriched in polar residues; that stretch reads WRFSQAQRPGTSGSQNGDDTGTWPNN. Positions 922 to 932 are enriched in basic residues; that stretch reads NKKKSGKKEKK.

The protein localises to the cell membrane. In terms of biological role, potential calcium-dependent cell-adhesion protein. May be involved in the establishment and maintenance of specific neuronal connections in the brain. This chain is Protocadherin gamma-A12 (PCDHGA12), found in Homo sapiens (Human).